The primary structure comprises 393 residues: NAD(P)H-quinone oxidoreductase subunit H, chloroplastic (393 aa).

The protein belongs to the complex I 49 kDa subunit family. In terms of assembly, NDH is composed of at least 16 different subunits, 5 of which are encoded in the nucleus.

It is found in the plastid. Its subcellular location is the chloroplast thylakoid membrane. It carries out the reaction a plastoquinone + NADH + (n+1) H(+)(in) = a plastoquinol + NAD(+) + n H(+)(out). The catalysed reaction is a plastoquinone + NADPH + (n+1) H(+)(in) = a plastoquinol + NADP(+) + n H(+)(out). NDH shuttles electrons from NAD(P)H:plastoquinone, via FMN and iron-sulfur (Fe-S) centers, to quinones in the photosynthetic chain and possibly in a chloroplast respiratory chain. The immediate electron acceptor for the enzyme in this species is believed to be plastoquinone. Couples the redox reaction to proton translocation, and thus conserves the redox energy in a proton gradient. The polypeptide is NAD(P)H-quinone oxidoreductase subunit H, chloroplastic (Jasminum nudiflorum (Winter jasmine)).